We begin with the raw amino-acid sequence, 100 residues long: Small ribosomal subunit protein uS14c (100 aa).

It belongs to the universal ribosomal protein uS14 family. In terms of assembly, part of the 30S ribosomal subunit.

It is found in the plastid. It localises to the chloroplast. Functionally, binds 16S rRNA, required for the assembly of 30S particles. The chain is Small ribosomal subunit protein uS14c from Chaetosphaeridium globosum (Charophycean green alga).